A 149-amino-acid chain; its full sequence is MIPMEELKVKKITNGTVIDHIDAGKALMVFKVLNVPKETSVMIAINVPSKKKGKKDILKIEGIELKKEDVDKISLISPDVTINIIRNGKVVEKLKPQIPDEIEGTLKCTNPNCITNKEKVRGKFKIESKNPLKIRCYYCEKFLNEVIFE.

Zn(2+) is bound by residues C108, C113, C136, and C139.

It belongs to the PyrI family. Heterododecamer (2C3:3R2) of six catalytic PyrB chains organized as two trimers (C3), and six regulatory PyrI chains organized as three dimers (R2). Requires Zn(2+) as cofactor.

Involved in allosteric regulation of aspartate carbamoyltransferase. The sequence is that of Aspartate carbamoyltransferase regulatory chain (pyrI) from Methanocaldococcus jannaschii (strain ATCC 43067 / DSM 2661 / JAL-1 / JCM 10045 / NBRC 100440) (Methanococcus jannaschii).